The following is a 158-amino-acid chain: Succinate dehydrogenase [ubiquinone] cytochrome b small subunit, mitochondrial (158 aa).

A mitochondrion-targeting transit peptide spans 1–55 (MALWRLSVLCGAREGRALFLRTPVVRPALVSAFLQDRPAQGWCGTQHIHLSPSHH). Topologically, residues 56-62 (SGSKAAS) are mitochondrial matrix. Residues 63–84 (LHWTGERVVSVLLLGLIPAAYL) traverse the membrane as a helical segment. The Mitochondrial intermembrane segment spans residues 85 to 89 (NPCSA). A helical transmembrane segment spans residues 90–110 (MDYSLAATLTLHSHWGIGQVV). His101 is a heme b binding site. Topologically, residues 111-119 (TDYVHGDAV) are mitochondrial matrix. Tyr113 is a binding site for a ubiquinone. Residues 120-141 (QKAAKTGLLVLSAFTFAGLCYF) form a helical membrane-spanning segment. Residues 142-158 (NYHDVGICKAVAMLWKL) lie on the Mitochondrial intermembrane side of the membrane.

The protein belongs to the CybS family. In terms of assembly, component of complex II composed of four subunits: the flavoprotein (FP) SDHA, iron-sulfur protein (IP) SDHB, and a cytochrome b560 composed of SDHC and SDHD.

It localises to the mitochondrion inner membrane. It participates in carbohydrate metabolism; tricarboxylic acid cycle. Its function is as follows. Membrane-anchoring subunit of succinate dehydrogenase (SDH) that is involved in complex II of the mitochondrial electron transport chain and is responsible for transferring electrons from succinate to ubiquinone (coenzyme Q). SDH also oxidizes malate to the non-canonical enol form of oxaloacetate, enol-oxaloacetate. Enol-oxaloacetate, which is a potent inhibitor of the succinate dehydrogenase activity, is further isomerized into keto-oxaloacetate. The protein is Succinate dehydrogenase [ubiquinone] cytochrome b small subunit, mitochondrial (SDHD) of Bos taurus (Bovine).